Consider the following 1055-residue polypeptide: Activated CDC42 kinase 1 (1055 aa).

The SAM-like domain stretch occupies residues Met-1–Gly-110. Residues Ser-91–Gly-110 are disordered. The residue at position 113 (Thr-113) is a Phosphothreonine. Positions Leu-126–Leu-385 constitute a Protein kinase domain. Residues Leu-132–Val-140 and Lys-158 contribute to the ATP site. Asp-252 (proton acceptor) is an active-site residue. Phosphotyrosine; by SRC and autocatalysis is present on Tyr-284. Residues Ala-388 to Gly-448 form the SH3 domain. A CRIB domain is found at Ile-454–Gly-466. The disordered stretch occupies residues Arg-505 to Lys-548. Residues Pro-518 and Tyr-533 each carry the phosphotyrosine modification. The tract at residues Asp-638–Ser-667 is required for interaction with SRC. The segment at Pro-647 to Tyr-650 is required for interaction with NEDD4. A disordered region spans residues Thr-737–Ala-855. The EBD domain stretch occupies residues Gly-748–Leu-891. Pro residues-rich tracts occupy residues Gln-753–Pro-764 and Pro-787–Pro-798. Residues Pro-817–Gly-827 show a composition bias toward low complexity. A Phosphotyrosine modification is found at Tyr-842. Residue Arg-854 is modified to Omega-N-methylarginine. 2 positions are modified to phosphotyrosine: Tyr-874 and Tyr-887. At Ser-896 the chain carries Phosphoserine. A disordered region spans residues Ser-896–Leu-952. The segment covering Leu-903–Ala-918 has biased composition (pro residues). The UBA domain maps to Pro-973–Glu-1013.

This sequence belongs to the protein kinase superfamily. Tyr protein kinase family. Homodimer. Interacts with CSPG4 (activated). Interacts with MERTK (activated); stimulates autophosphorylation. May interact (phosphorylated) with HSP90AB1; maintains kinase activity. Interacts with NPHP1. Interacts with SNX9 (via SH3 domain). Interacts with SRC (via SH2 and SH3 domain). Part of a collagen stimulated complex involved in cell migration composed of CDC42, CRK, TNK2 and BCAR1/p130cas. Interacts with BCAR1/p130cas via SH3 domains. Forms complexes with GRB2 and numerous receptor tyrosine kinases (RTK) including LTK, AXL or PDGFRL, in which GRB2 promotes RTK recruitment by TNK2. Interacts with CDC42. Interacts with EGFR, and this interaction is dependent on EGF stimulation and kinase activity of EGFR. Interacts (via kinase domain) with AKT1. Interacts with NEDD4 (via WW3 domain). NEDD4L and EGF promote association with NEDD4. It depends on Mg(2+) as a cofactor. Post-translationally, autophosphorylation regulates kinase activity. Phosphorylation on Tyr-533 is required for interaction with SRC and is observed during association with clathrin-coated pits. Polyubiquitinated by NEDD4 and NEDD4L. Degradation can be induced by EGF and is lysosome-dependent. Ubiquitously present in all tissues tested. Highly expressed in the adult central nervous system (CNS); hippocampus, neocortex, and cerebellum, both at dendritic spines and presynaptic axon terminals. Levels are strongly increased during enhanced neural activity.

Its subcellular location is the cell membrane. The protein resides in the nucleus. The protein localises to the endosome. It is found in the cell junction. It localises to the adherens junction. Its subcellular location is the cytoplasmic vesicle membrane. The protein resides in the cytoplasmic vesicle. The protein localises to the clathrin-coated vesicle. It is found in the membrane. It localises to the clathrin-coated pit. Its subcellular location is the cytoplasm. The protein resides in the cytosol. It catalyses the reaction L-tyrosyl-[protein] + ATP = O-phospho-L-tyrosyl-[protein] + ADP + H(+). The catalysed reaction is L-seryl-[protein] + ATP = O-phospho-L-seryl-[protein] + ADP + H(+). The enzyme catalyses L-threonyl-[protein] + ATP = O-phospho-L-threonyl-[protein] + ADP + H(+). Its function is as follows. Non-receptor tyrosine-protein and serine/threonine-protein kinase that is implicated in cell spreading and migration, cell survival, cell growth and proliferation. Transduces extracellular signals to cytosolic and nuclear effectors. Phosphorylates AKT1, AR, MCF2, WASL and WWOX. Implicated in trafficking and clathrin-mediated endocytosis through binding to epidermal growth factor receptor (EGFR) and clathrin. Binds to both poly- and mono-ubiquitin and regulates ligand-induced degradation of EGFR, thereby contributing to the accumulation of EGFR at the limiting membrane of early endosomes. Downstream effector of CDC42 which mediates CDC42-dependent cell migration via phosphorylation of BCAR1. May be involved both in adult synaptic function and plasticity and in brain development. Activates AKT1 by phosphorylating it on 'Tyr-176'. Phosphorylates AR on 'Tyr-267' and 'Tyr-363' thereby promoting its recruitment to androgen-responsive enhancers (AREs). Phosphorylates WWOX on 'Tyr-287'. Phosphorylates MCF2, thereby enhancing its activity as a guanine nucleotide exchange factor (GEF) toward Rho family proteins. Contributes to the control of AXL receptor levels. Confers metastatic properties on cancer cells and promotes tumor growth by negatively regulating tumor suppressor such as WWOX and positively regulating pro-survival factors such as AKT1 and AR. The chain is Activated CDC42 kinase 1 (Tnk2) from Mus musculus (Mouse).